A 95-amino-acid polypeptide reads, in one-letter code: UPF0358 protein BT9727_3692 (95 aa).

Belongs to the UPF0358 family.

This is UPF0358 protein BT9727_3692 from Bacillus thuringiensis subsp. konkukian (strain 97-27).